Here is a 346-residue protein sequence, read N- to C-terminus: Partitioning defective 6 homolog alpha (346 aa).

The tract at residues 1-116 (MARPQRTPAR…SNSLQRRKKG (116 aa)) is interaction with PRKCI and PRKCZ. The PB1 domain maps to 15-95 (IVEVKSKFDA…PPLRLLVQKR (81 aa)). An interaction with PARD3 and CDC42 region spans residues 126–253 (RTRPPLLISL…VTVKPANQRN (128 aa)). One can recognise a Pseudo-CRIB domain in the interval 133–150 (ISLPQDFRQVSSVIDVDL). The 94-residue stretch at 157–250 (RVRLHKHGSD…NLIVTVKPAN (94 aa)) folds into the PDZ domain. The tract at residues 257–346 (RGASGRLTGP…IRGDGSGFSL (90 aa)) is disordered. Ser278 and Ser345 each carry phosphoserine.

Belongs to the PAR6 family. Interacts with MAP2K5. Interacts with PARD3. Interacts with GTP-bound forms of CDC42, RHOQ/TC10 and RAC1. Interacts with the N-terminal part of PRKCI and PRKCZ. Part of a complex with PARD3, CDC42 or RAC1 and PRKCI or PRKCZ. Part of a complex with LLGL1 and PRKCI. Interacts with human T-cell leukemia virus type I TAX protein. Interacts with PALS1 and CRB3. Interacts with TGFBR1; involved in TGF-beta induced epithelial to mesenchymal transition. Interacts with ECT2 ('Thr-359' phosphorylated form) and PRKCI. Interacts with DCTN1 and PCM1. In terms of processing, phosphorylated by the TGF-beta receptor. Ubiquitinated by the SCF(FBXO31) complex, leading to its proteasomal degradation. Expressed in pancreas, skeletal muscle, brain and heart. Weakly expressed in kidney and placenta.

It localises to the cytoplasm. The protein localises to the cell membrane. It is found in the cell projection. The protein resides in the ruffle. Its subcellular location is the cell junction. It localises to the tight junction. The protein localises to the cytoskeleton. It is found in the microtubule organizing center. The protein resides in the centrosome. Its subcellular location is the centriolar satellite. Its function is as follows. Adapter protein involved in asymmetrical cell division and cell polarization processes. Probably involved in the formation of epithelial tight junctions. Association with PARD3 may prevent the interaction of PARD3 with F11R/JAM1, thereby preventing tight junction assembly. The PARD6-PARD3 complex links GTP-bound Rho small GTPases to atypical protein kinase C proteins. Regulates centrosome organization and function. Essential for the centrosomal recruitment of key proteins that control centrosomal microtubule organization. The polypeptide is Partitioning defective 6 homolog alpha (PARD6A) (Homo sapiens (Human)).